Here is a 309-residue protein sequence, read N- to C-terminus: Aspartate carbamoyltransferase catalytic subunit (309 aa).

The carbamoyl phosphate site is built by R56 and T57. K84 contributes to the L-aspartate binding site. 3 residues coordinate carbamoyl phosphate: R106, H136, and Q139. L-aspartate is bound by residues R169 and R221. 2 residues coordinate carbamoyl phosphate: A264 and P265.

This sequence belongs to the aspartate/ornithine carbamoyltransferase superfamily. ATCase family. Heterododecamer (2C3:3R2) of six catalytic PyrB chains organized as two trimers (C3), and six regulatory PyrI chains organized as three dimers (R2).

The enzyme catalyses carbamoyl phosphate + L-aspartate = N-carbamoyl-L-aspartate + phosphate + H(+). It functions in the pathway pyrimidine metabolism; UMP biosynthesis via de novo pathway; (S)-dihydroorotate from bicarbonate: step 2/3. Its function is as follows. Catalyzes the condensation of carbamoyl phosphate and aspartate to form carbamoyl aspartate and inorganic phosphate, the committed step in the de novo pyrimidine nucleotide biosynthesis pathway. In Limosilactobacillus reuteri subsp. reuteri (strain JCM 1112) (Lactobacillus reuteri), this protein is Aspartate carbamoyltransferase catalytic subunit.